Reading from the N-terminus, the 469-residue chain is Glutamate--tRNA ligase (469 aa).

A 'HIGH' region motif is present at residues 9 to 19; it reads PSPTGFLHVGG. Positions 98, 100, 125, and 127 each coordinate Zn(2+). The 'KMSKS' region motif lies at 236–240; the sequence is KLSKR. ATP is bound at residue Lys239.

The protein belongs to the class-I aminoacyl-tRNA synthetase family. Glutamate--tRNA ligase type 1 subfamily. In terms of assembly, monomer. Zn(2+) is required as a cofactor.

The protein resides in the cytoplasm. It catalyses the reaction tRNA(Glu) + L-glutamate + ATP = L-glutamyl-tRNA(Glu) + AMP + diphosphate. Its function is as follows. Catalyzes the attachment of glutamate to tRNA(Glu) in a two-step reaction: glutamate is first activated by ATP to form Glu-AMP and then transferred to the acceptor end of tRNA(Glu). This is Glutamate--tRNA ligase from Shewanella sp. (strain ANA-3).